The following is a 334-amino-acid chain: GTPase Obg (334 aa).

The region spanning 1-159 (MRFVDEVVIK…KEVRLELNLL (159 aa)) is the Obg domain. One can recognise an OBG-type G domain in the interval 160-331 (ADIALLGLPN…LAKKLNEFLH (172 aa)). GTP is bound by residues 166-173 (GLPNAGKS), 191-195 (FTTMY), 212-215 (DIPG), 282-285 (NKID), and 312-314 (SAA). Residues Ser173 and Thr193 each coordinate Mg(2+).

It belongs to the TRAFAC class OBG-HflX-like GTPase superfamily. OBG GTPase family. Monomer. Requires Mg(2+) as cofactor.

The protein localises to the cytoplasm. Functionally, an essential GTPase which binds GTP, GDP and possibly (p)ppGpp with moderate affinity, with high nucleotide exchange rates and a fairly low GTP hydrolysis rate. Plays a role in control of the cell cycle, stress response, ribosome biogenesis and in those bacteria that undergo differentiation, in morphogenesis control. This chain is GTPase Obg, found in Francisella philomiragia subsp. philomiragia (strain ATCC 25017 / CCUG 19701 / FSC 153 / O#319-036).